The following is a 1372-amino-acid chain: DNA-directed RNA polymerase subunit beta' (1372 aa).

Zn(2+) is bound by residues C69, C71, C84, and C87. D460, D462, and D464 together coordinate Mg(2+). Zn(2+)-binding residues include C808, C882, C889, and C892.

It belongs to the RNA polymerase beta' chain family. In terms of assembly, the RNAP catalytic core consists of 2 alpha, 1 beta, 1 beta' and 1 omega subunit. When a sigma factor is associated with the core the holoenzyme is formed, which can initiate transcription. The cofactor is Mg(2+). Requires Zn(2+) as cofactor.

The catalysed reaction is RNA(n) + a ribonucleoside 5'-triphosphate = RNA(n+1) + diphosphate. Functionally, DNA-dependent RNA polymerase catalyzes the transcription of DNA into RNA using the four ribonucleoside triphosphates as substrates. The sequence is that of DNA-directed RNA polymerase subunit beta' from Rickettsia prowazekii (strain Madrid E).